A 211-amino-acid chain; its full sequence is Uracil phosphoribosyltransferase (211 aa).

Residues R81, R106, and 133-141 (DPMLATGNS) each bind 5-phospho-alpha-D-ribose 1-diphosphate. Uracil contacts are provided by residues I196 and 201–203 (GDA). D202 is a 5-phospho-alpha-D-ribose 1-diphosphate binding site.

Belongs to the UPRTase family. The cofactor is Mg(2+).

The catalysed reaction is UMP + diphosphate = 5-phospho-alpha-D-ribose 1-diphosphate + uracil. It participates in pyrimidine metabolism; UMP biosynthesis via salvage pathway; UMP from uracil: step 1/1. With respect to regulation, allosterically activated by GTP. Functionally, catalyzes the conversion of uracil and 5-phospho-alpha-D-ribose 1-diphosphate (PRPP) to UMP and diphosphate. In Myxococcus xanthus (strain DK1622), this protein is Uracil phosphoribosyltransferase.